The chain runs to 26 residues: Hainantoxin F1-31.97 (26 aa).

2 disulfide bridges follow: Cys2–Cys16 and Cys9–Cys21.

It belongs to the neurotoxin 10 (Hwtx-1) family. 17 (Hntx-9) subfamily. As to expression, expressed by the venom gland.

It localises to the secreted. Its function is as follows. Ion channel inhibitor. The sequence is that of Hainantoxin F1-31.97 from Cyriopagopus hainanus (Chinese bird spider).